The chain runs to 2147 residues: Non-reducing polyketide synthase albA (2147 aa).

The segment at Tyr8–His244 is N-terminal acylcarrier protein transacylase domain (SAT). One can recognise a Ketosynthase family 3 (KS3) domain in the interval Cys375–Asp806. Catalysis depends on for beta-ketoacyl synthase activity residues Cys547, His682, and His724. The segment at Phe912–Asp1232 is malonyl-CoA:ACP transacylase (MAT) domain. The active-site For acyl/malonyl transferase activity is Ser1001. The interval His1286 to Ala1425 is N-terminal hotdog fold. The PKS/mFAS DH domain maps to His1286–Asp1598. The interval Thr1290–Pro1603 is product template (PT) domain. Catalysis depends on His1326, which acts as the Proton acceptor; for dehydratase activity. Positions Asp1452 to Asp1598 are C-terminal hotdog fold. Asp1511 functions as the Proton donor; for dehydratase activity in the catalytic mechanism. A disordered region spans residues Lys1608–Lys1637. Low complexity predominate over residues Pro1610 to Lys1637. The region spanning Pro1642–Ser1719 is the Carrier 1 domain. Ser1679 carries the O-(pantetheine 4'-phosphoryl)serine modification. The disordered stretch occupies residues Ser1719–Lys1759. The span at Ser1724–Ser1747 shows a compositional bias: low complexity. The region spanning Ile1760 to Pro1837 is the Carrier 2 domain. An O-(pantetheine 4'-phosphoryl)serine modification is found at Ser1797. Residues Ser1873–Met2145 are claisen cyclase domain. Catalysis depends on Ser1963, which acts as the For Claisen cyclase activity.

It catalyses the reaction 6 malonyl-CoA + acetyl-CoA + 6 H(+) = naphtopyrone YWA1 + 6 CO2 + 7 CoA + H2O. The protein operates within secondary metabolite biosynthesis. Functionally, non-reducing polyketide synthase involved in the biosynthesis of bifonsecin B, a dimeric gamma-naphthopyrone. The first step in the biosynthesis of bifonsecin B is the production of gamma-naphthopyrone precursor YWA1 by the non-reducing polyketide synthase albA, via condensation of one acetyl-CoA starter unit with 6 malonyl-CoA units. YWA1 is then methylated by bfoE at position C-6 to yield foncesin which is further methylated at position C-8 by bfoD to produce fonsecin B. A key enzyme in the biosynthetic pathway is the cytochrome P450 monooxygenase bfoB which catalyzes the oxidative dimerization of fonsecin B to bifonsecin B. Bfob also catalyzes the oxidative dimerization of rubrofusarin B into nigerone. The stereoselectivity of bfoB is influenced by the two natural monomeric substrates; homodimerization of fonsecin B yields a stereochemically pure biaryl, M-foncerine B, while rubrofusarin B yields a mixture of enantiomers M- and P-nigerone. The protein is Non-reducing polyketide synthase albA of Aspergillus brasiliensis (strain CBS 101740 / IMI 381727 / IBT 21946).